A 369-amino-acid polypeptide reads, in one-letter code: 3-methylarginine biosynthesis aminotransferase ArgM (369 aa).

Position 216 is an N6-(pyridoxal phosphate)lysine (Lys-216).

It belongs to the class-I pyridoxal-phosphate-dependent aminotransferase family. Pyridoxal 5'-phosphate is required as a cofactor.

It catalyses the reaction L-arginine + 2-oxoglutarate = 5-guanidino-2-oxopentanoate + L-glutamate. The catalysed reaction is (3R)-5-guanidino-3-methyl-2-oxopentanoate + L-aspartate = (3R)-3-methyl-L-arginine + oxaloacetate. Its pathway is antibiotic biosynthesis. In terms of biological role, aminotransferase involved in the formation of the rare amino acid 3-methylarginine (MeArg), which is incorporated into the peptidyl nucleoside antibiotic arginomycin. Catalyzes two rounds of transamination: the transfer of the amino group from L-arginine to 2-oxoglutarate to give glutamate and 5-guanidino-2-oxopentanoic acid, which will be methylated by ArgN. Then, ArgM specifically catalyzes transamination from the donor L-aspartate to the 5-guanidino-3-methyl-2-oxopentanoic acid produced by ArgN, generating the final product, 3-methylarginine. Cannot use arginine analogs, such as D-arginine, L-homoarginine and N-methylarginine for the first transamination. This Streptomyces arginensis protein is 3-methylarginine biosynthesis aminotransferase ArgM.